A 230-amino-acid polypeptide reads, in one-letter code: MEAIILVGGLGKRLRSVVSELPKPMAPIDNKPFLHYIFWYLNKQGIDQVILSTGYKHEMIETYFGNRYHGISINYSIEQEPLGTGGAIKKAFRKTTEENVVIINGDTLFLVDLRKMFERHISFKADLTLALKPMKEFERYGTVITRDSRVIAFKEKGYHSEGNINGGVYIANKAIFECESLSEKFSFEQDFLEKEFLQKKFYGFISDAYFIDIGIPDDYRKAQKELQHYI.

Belongs to the D-alpha-D-heptose-1-P guanylyltransferase family.

It catalyses the reaction D-glycero-alpha-D-manno-heptose 1-phosphate + GTP + H(+) = GDP-D-glycero-alpha-D-manno-heptose + diphosphate. It functions in the pathway nucleotide-sugar biosynthesis; GDP-D-glycero-alpha-D-manno-heptose biosynthesis; GDP-D-glycero-alpha-D-manno-heptose from D-glycero-alpha-D-manno-heptose 7-phosphate: step 3/3. Its pathway is cell surface structure biogenesis; S-layer biogenesis. In terms of biological role, catalyzes the GDP transfer from GTP to D-glycero-alpha-D-manno-heptose 1-phosphate, yielding GDP-D-alpha-D-heptose. Cannot use ATP, CTP, dTTP or UTP as substrate. This chain is D-glycero-alpha-D-manno-heptose 1-phosphate guanylyltransferase (hddC), found in Aneurinibacillus thermoaerophilus.